A 945-amino-acid chain; its full sequence is Splicing factor, suppressor of white-apricot homolog (945 aa).

Disordered stretches follow at residues 1-28 (MYGA…GTGT) and 157-190 (YYDP…PFIA). Composition is skewed to basic and acidic residues over residues 9–21 (AKAE…KEEA) and 169–178 (PSKQREKSEA). One copy of the SURP motif 1 repeat lies at 211 to 253 (IIERTANFVCKQGAQFEIMLKAKQARNSQFDFLRFDHYLNPYY). Residues 269–298 (AESKSEEKKKSGPTSDNEEEDDEEDGSYLH) are disordered. Ser-283 is modified (phosphoserine). Acidic residues predominate over residues 284–294 (DNEEEDDEEDG). Position 315 is an N6-acetyllysine (Lys-315). Disordered stretches follow at residues 332–355 (KAQA…PSQV) and 403–438 (SSSP…STTT). Residues 335–352 (ADSSAPAPPTADGTPAQP) show a composition bias toward low complexity. The span at 412–425 (VPPPPGTTPPPPPT) shows a compositional bias: pro residues. Residues 426-438 (TAESSSGVTSTTT) show a composition bias toward low complexity. Residues 458-498 (VIDKLAEYVARNGLKFETSVRAKNDQRFEFLQPWHQYNAYY) form an SURP motif 2 repeat. Disordered regions lie at residues 512-566 (GSTQ…TVDG), 589-680 (PLEK…QAER), and 714-921 (GVMP…VQSK). Residues 514 to 527 (TQAASTAEEAPTET) show a composition bias toward low complexity. Positions 528–540 (AVEESSEAGEDGA) are enriched in acidic residues. The segment covering 589 to 598 (PLEKNRVKLD) has biased composition (basic and acidic residues). 2 positions are modified to phosphoserine: Ser-601 and Ser-621. A compositionally biased stretch (low complexity) spans 615–630 (SSVANPSPAAAPPSAV). A coiled-coil region spans residues 632 to 686 (EEKKPQLTQEELEAKQAKQKLEDRLAAAAREKLAQASKESKEKQLQAERKRKAAL). Phosphothreonine is present on Thr-639. 2 stretches are compositionally biased toward basic and acidic residues: residues 643-679 (LEAK…LQAE) and 733-752 (KPPE…EERE). Basic residues-rich tracts occupy residues 753–787 (KKKK…KAKH) and 795–810 (TVRR…RRRA). Residues 811-821 (HSPERRREDRS) show a composition bias toward basic and acidic residues. Phosphoserine is present on residues Ser-829 and Ser-831. Residues 835-861 (SRKRTRSRSPHEKKKKRRSRSRTKAKA) are compositionally biased toward basic residues. Residues 871 to 894 (QAAQRPSAHSAHSASISPVESRGS) are compositionally biased toward low complexity. Positions 895 to 908 (SQERSRGVSQEKDG) are enriched in basic and acidic residues. Residues Ser-899 and Ser-903 each carry the phosphoserine modification. Positions 909 to 920 (QISSAIVSSVQS) are enriched in low complexity.

Its subcellular location is the nucleus. Its function is as follows. Plays a role as an alternative splicing regulator. Regulate its own expression at the level of RNA processing. Also regulates the splicing of fibronectin and CD45 genes. May act, at least in part, by interaction with other R/S-containing splicing factors. Represses the splicing of MAPT/Tau exon 10. The sequence is that of Splicing factor, suppressor of white-apricot homolog (Sfswap) from Rattus norvegicus (Rat).